The primary structure comprises 136 residues: Succinate dehydrogenase 2 membrane subunit SdhC (136 aa).

The next 3 membrane-spanning stretches (helical) occupy residues 32-52 (RISG…AAML), 70-90 (IVGL…LNGI), and 109-129 (LWII…VVGI). Heme is bound at residue histidine 85.

It belongs to the cytochrome b560 family. In terms of assembly, part of an enzyme complex containing four subunits: a flavoprotein (SdhA), an iron-sulfur protein (SdhB), plus two membrane-anchoring proteins (SdhC and SdhD). It depends on heme as a cofactor.

It localises to the cell membrane. In terms of biological role, membrane-anchoring subunit of succinate dehydrogenase 2 (Sdh2). Sdh2 may catalyze the two-electron oxidation of succinate to fumarate with a corresponding reduction of quinone to quinol under low oxygen conditions, when the primary aerobic succinate dehydrogenase (Sdh1) is inhibited. Sdh2 seems to be the generator of the proton motive force (PMF) under hypoxia. The sequence is that of Succinate dehydrogenase 2 membrane subunit SdhC from Mycobacterium tuberculosis (strain ATCC 25618 / H37Rv).